Here is a 294-residue protein sequence, read N- to C-terminus: Probable 2-(5''-triphosphoribosyl)-3'-dephosphocoenzyme-A synthase (294 aa).

It belongs to the CitG/MdcB family.

It carries out the reaction 3'-dephospho-CoA + ATP = 2'-(5''-triphospho-alpha-D-ribosyl)-3'-dephospho-CoA + adenine. This is Probable 2-(5''-triphosphoribosyl)-3'-dephosphocoenzyme-A synthase from Streptococcus equi subsp. zooepidemicus (strain MGCS10565).